Reading from the N-terminus, the 332-residue chain is Malate dehydrogenase, cytoplasmic (332 aa).

Residues 11-17 (GAAGQIA) and Asp42 contribute to the NAD(+) site. 2 residues coordinate substrate: Arg92 and Arg98. NAD(+) is bound by residues Asn105, Gln112, and 129 to 131 (VGN). Substrate-binding residues include Asn131 and Arg162. His187 (proton acceptor) is an active-site residue.

Belongs to the LDH/MDH superfamily. MDH type 2 family. As to quaternary structure, homodimer.

The protein resides in the cytoplasm. It catalyses the reaction (S)-malate + NAD(+) = oxaloacetate + NADH + H(+). Its activity is regulated as follows. By arsenate for both the forward and reverse reactions. Its function is as follows. Malate dehydrogenase. Has no activity with NADPH as substrate. Does not show lactate dehydrogenase activity. In Taenia solium (Pork tapeworm), this protein is Malate dehydrogenase, cytoplasmic.